We begin with the raw amino-acid sequence, 752 residues long: Multifunctional tryptophan biosynthesis protein (752 aa).

The 200-residue stretch at 3–202 (FTLLIDNYDS…IQMKGGKWGG (200 aa)) folds into the Glutamine amidotransferase type-1 domain. Residue 58-60 (GPG) coordinates L-glutamine. Cys86 (nucleophile; for GATase activity) is an active-site residue. Position 136-137 (136-137 (SL)) interacts with L-glutamine. Residues His176 and Glu178 each act as for GATase activity in the active site. Residues 231–495 (ILNKIHAQRL…DTKAFLRSLI (265 aa)) are indole-3-glycerol phosphate synthase. The N-(5'-phosphoribosyl)anthranilate isomerase stretch occupies residues 509–752 (LVKICGIRST…VEAFVKAVRG (244 aa)).

It catalyses the reaction N-(5-phospho-beta-D-ribosyl)anthranilate = 1-(2-carboxyphenylamino)-1-deoxy-D-ribulose 5-phosphate. The enzyme catalyses 1-(2-carboxyphenylamino)-1-deoxy-D-ribulose 5-phosphate + H(+) = (1S,2R)-1-C-(indol-3-yl)glycerol 3-phosphate + CO2 + H2O. The catalysed reaction is chorismate + L-glutamine = anthranilate + pyruvate + L-glutamate + H(+). The protein operates within amino-acid biosynthesis; L-tryptophan biosynthesis; L-tryptophan from chorismate: step 1/5. Its pathway is amino-acid biosynthesis; L-tryptophan biosynthesis; L-tryptophan from chorismate: step 3/5. It participates in amino-acid biosynthesis; L-tryptophan biosynthesis; L-tryptophan from chorismate: step 4/5. Its function is as follows. Trifunctional enzyme bearing the Gln amidotransferase (GATase) domain of anthranilate synthase, indole-glycerolphosphate synthase, and phosphoribosylanthranilate isomerase activities. This chain is Multifunctional tryptophan biosynthesis protein (TRP1), found in Cryptococcus neoformans var. grubii serotype A (strain H99 / ATCC 208821 / CBS 10515 / FGSC 9487) (Filobasidiella neoformans var. grubii).